The primary structure comprises 622 residues: 1-deoxy-D-xylulose-5-phosphate synthase (622 aa).

Thiamine diphosphate contacts are provided by residues His80 and 121–123 (GHS). A Mg(2+)-binding site is contributed by Asp152. Residues 153 to 154 (GA), Asn181, Tyr288, and Glu370 contribute to the thiamine diphosphate site. Asn181 is a Mg(2+) binding site.

This sequence belongs to the transketolase family. DXPS subfamily. In terms of assembly, homodimer. It depends on Mg(2+) as a cofactor. Requires thiamine diphosphate as cofactor.

The enzyme catalyses D-glyceraldehyde 3-phosphate + pyruvate + H(+) = 1-deoxy-D-xylulose 5-phosphate + CO2. It participates in metabolic intermediate biosynthesis; 1-deoxy-D-xylulose 5-phosphate biosynthesis; 1-deoxy-D-xylulose 5-phosphate from D-glyceraldehyde 3-phosphate and pyruvate: step 1/1. In terms of biological role, catalyzes the acyloin condensation reaction between C atoms 2 and 3 of pyruvate and glyceraldehyde 3-phosphate to yield 1-deoxy-D-xylulose-5-phosphate (DXP). This chain is 1-deoxy-D-xylulose-5-phosphate synthase, found in Shewanella sp. (strain MR-4).